A 511-amino-acid polypeptide reads, in one-letter code: MKFFLLLSLIGFCWAQYDPHTQYGRTAIVHLFEWRWVDIAKECERYLAPNGFAGVQVSPPNENIVVHSPSRPWWERYQPISYKICSRSGNEDEFRDMVNRCNNVGVRIYVDAVINHMCGVGAQAGQSSTCGSYFNPNNRDFPGVPYSGFDFNDGKCRTASGGIENYQDAAQVRDCRLSGLLDLALEKDYVRTKVADYMNHLIDIGVAGFRLDASKHMWPGDIKAILDKLHNLNTKWFSQGSRPFIFQEVIDLGGEAVSSNEYFGNGRVTEFKYGAKLGKVMRKWDGEKMSYLKNWGEGWGLMPSDRALVFVDNHDNQRGHGAGGASILTFWDARLYKMAVGFMLAHPYGFTRVMSSYYWPRNFQNGKDVNDWVGPPNNNGKTKEVSINPDSTCGNDWICEHRWRQIRNMVAFRNVVNGQPFANWWDNDSNQVAFGRGNKGFIVFNNDDWALSETLQTGLPAGTYCDVISGDKVDGNCTGIKVYVGNDGKAHFSISNSAEDPFIAIHAESKI.

Positions 1–15 are cleaved as a signal peptide; that stretch reads MKFFLLLSLIGFCWA. Q16 carries the post-translational modification Pyrrolidone carboxylic acid. 3 disulfide bridges follow: C43/C101, C85/C130, and C156/C175. Ca(2+) is bound by residues N115, R173, and D182. R210 is a binding site for chloride. D212 (nucleophile) is an active-site residue. Residue H216 participates in Ca(2+) binding. Residue E248 is the Proton donor of the active site. The chloride site is built by N313 and R352. Intrachain disulfides connect C393–C399 and C465–C477.

Belongs to the glycosyl hydrolase 13 family. Monomer. Ca(2+) is required as a cofactor. Chloride serves as cofactor. Expressed in liver and saliva.

Its subcellular location is the secreted. It carries out the reaction Endohydrolysis of (1-&gt;4)-alpha-D-glucosidic linkages in polysaccharides containing three or more (1-&gt;4)-alpha-linked D-glucose units.. The protein is Alpha-amylase 1 (Amy1) of Mus musculus (Mouse).